Consider the following 871-residue polypeptide: Zinc finger and BTB domain-containing protein 10 (871 aa).

Disordered stretches follow at residues 1 to 156 and 177 to 228; these read MSFS…FNGR and GASL…AGEG. The span at 14–26 shows a compositional bias: gly residues; the sequence is RGGGLVTASGGGS. Positions 27–37 are enriched in low complexity; it reads TNNNAGGEASA. A compositionally biased stretch (pro residues) spans 39–56; the sequence is PPQPQPRQPPPPAPPALQ. The segment covering 65–76 has biased composition (acidic residues); it reads EEVELEGLEPQD. The segment covering 77–103 has biased composition (low complexity); sequence LEASAGPAAGAAEEAKELLLPQDAGGP. Position 126 is an omega-N-methylarginine (R126). Residues 126–135 are compositionally biased toward gly residues; sequence RGGGGGGLGN. A Phosphoserine modification is found at S210. Residue K245 forms a Glycyl lysine isopeptide (Lys-Gly) (interchain with G-Cter in SUMO2) linkage. The BTB domain maps to 364–433; sequence CDVSIVVSGK…LYSGNLVLTS (70 aa). Glycyl lysine isopeptide (Lys-Gly) (interchain with G-Cter in SUMO2) cross-links involve residues K468, K483, and K497. Phosphoserine is present on S565. Glycyl lysine isopeptide (Lys-Gly) (interchain with G-Cter in SUMO2) cross-links involve residues K573, K672, K684, K696, and K706. C2H2-type zinc fingers lie at residues 722–744 and 750–772; these read LKCP…LLIH and FSCD…SLVH. Residues 812 to 871 are disordered; sequence SQPGGQEGVDQGQDTEFPRDEEYEENEVGEADEELVDDGEDQNDPSRWDESGEVCMSLDD. The span at 830–854 shows a compositional bias: acidic residues; it reads RDEEYEENEVGEADEELVDDGEDQN.

It is found in the nucleus. In terms of biological role, may be involved in transcriptional regulation. This chain is Zinc finger and BTB domain-containing protein 10 (ZBTB10), found in Homo sapiens (Human).